The primary structure comprises 150 residues: Endoribonuclease YbeY (150 aa).

Zn(2+) is bound by residues histidine 112, histidine 116, and aspartate 122.

Belongs to the endoribonuclease YbeY family. It depends on Zn(2+) as a cofactor.

The protein localises to the cytoplasm. Its function is as follows. Single strand-specific metallo-endoribonuclease involved in late-stage 70S ribosome quality control and in maturation of the 3' terminus of the 16S rRNA. The sequence is that of Endoribonuclease YbeY from Protochlamydia amoebophila (strain UWE25).